The sequence spans 76 residues: Zinc finger protein 706 (76 aa).

Low complexity predominate over residues 1–13 (MARGQQKIQSQQK). Disordered regions lie at residues 1-32 (MARG…QKAA) and 53-76 (TFKQ…DVQA). Basic and acidic residues-rich tracts occupy residues 17–31 (KQAE…DQKA) and 53–62 (TFKQHFESKH). The C2H2-type zinc-finger motif lies at 39–62 (YTCTVCRTQMPDPKTFKQHFESKH).

It localises to the cytoplasm. The protein localises to the nucleus. Functionally, transcription repressor involved in the exit of embryonic stem cells (ESCs) from self-renewal. The polypeptide is Zinc finger protein 706 (Gallus gallus (Chicken)).